Here is a 92-residue protein sequence, read N- to C-terminus: Secreted RxLR effector protein 21 (92 aa).

The signal sequence occupies residues 1–21; the sequence is MNLSTLLLTLACISQLHGGSA. The RxLR signature appears at 30–33; the sequence is RQLR.

This sequence belongs to the RxLR effector family.

The protein resides in the secreted. The protein localises to the host nucleus. It is found in the host cytoplasm. Functionally, secreted effector that completely suppresses the host cell death induced by cell death-inducing proteins. The protein is Secreted RxLR effector protein 21 of Plasmopara viticola (Downy mildew of grapevine).